The following is a 376-amino-acid chain: S-adenosylmethionine synthase (376 aa).

His14 lines the ATP pocket. Asp16 is a Mg(2+) binding site. Glu42 contacts K(+). Residues Glu55 and Gln98 each contribute to the L-methionine site. Residues 98–108 (QSPEIALGISS) form a flexible loop region. ATP is bound by residues 158–160 (DGK), 224–225 (RF), Asp233, 239–240 (RK), Ala256, and Lys260. Asp233 provides a ligand contact to L-methionine. Lys264 is an L-methionine binding site.

This sequence belongs to the AdoMet synthase family. In terms of assembly, homotetramer; dimer of dimers. Mg(2+) serves as cofactor. It depends on K(+) as a cofactor.

The protein localises to the cytoplasm. The enzyme catalyses L-methionine + ATP + H2O = S-adenosyl-L-methionine + phosphate + diphosphate. It participates in amino-acid biosynthesis; S-adenosyl-L-methionine biosynthesis; S-adenosyl-L-methionine from L-methionine: step 1/1. Its function is as follows. Catalyzes the formation of S-adenosylmethionine (AdoMet) from methionine and ATP. The overall synthetic reaction is composed of two sequential steps, AdoMet formation and the subsequent tripolyphosphate hydrolysis which occurs prior to release of AdoMet from the enzyme. This is S-adenosylmethionine synthase from Aquifex aeolicus (strain VF5).